The chain runs to 255 residues: Endonuclease V (255 aa).

Positions 42 and 110 each coordinate Mg(2+).

This sequence belongs to the endonuclease V family. It depends on Mg(2+) as a cofactor.

The protein resides in the cytoplasm. It catalyses the reaction Endonucleolytic cleavage at apurinic or apyrimidinic sites to products with a 5'-phosphate.. DNA repair enzyme involved in the repair of deaminated bases. Selectively cleaves double-stranded DNA at the second phosphodiester bond 3' to a deoxyinosine leaving behind the intact lesion on the nicked DNA. The polypeptide is Endonuclease V (Aeropyrum pernix (strain ATCC 700893 / DSM 11879 / JCM 9820 / NBRC 100138 / K1)).